Here is a 52-residue protein sequence, read N- to C-terminus: UPF0391 membrane protein ABAYE0050 (52 aa).

2 helical membrane passes run 6 to 26 and 30 to 50; these read IIFA…VAGL and FAVI…ISRG.

The protein belongs to the UPF0391 family.

It is found in the cell membrane. The polypeptide is UPF0391 membrane protein ABAYE0050 (Acinetobacter baumannii (strain AYE)).